The primary structure comprises 144 residues: Large ribosomal subunit protein uL16 (144 aa).

It belongs to the universal ribosomal protein uL16 family. In terms of assembly, part of the 50S ribosomal subunit.

Its function is as follows. Binds 23S rRNA and is also seen to make contacts with the A and possibly P site tRNAs. The sequence is that of Large ribosomal subunit protein uL16 from Lysinibacillus sphaericus (strain C3-41).